A 398-amino-acid chain; its full sequence is Lysophospholipid transporter LplT (398 aa).

The next 12 helical transmembrane spans lie at Met16–Ala36, Ile53–Ala73, Ala91–Val111, Leu139–Ala159, Ile163–Tyr183, Ser195–Trp213, Leu227–Leu247, Ala253–Ala273, Met286–Phe306, Ala310–Leu330, Ile344–Leu364, and Val372–Leu392.

The protein belongs to the major facilitator superfamily. LplT (TC 2.A.1.42) family.

The protein localises to the cell inner membrane. Its function is as follows. Catalyzes the facilitated diffusion of 2-acyl-glycero-3-phosphoethanolamine (2-acyl-GPE) into the cell. The sequence is that of Lysophospholipid transporter LplT from Serratia proteamaculans (strain 568).